The sequence spans 171 residues: Co-chaperone protein HscB (171 aa).

Positions 2 to 74 (DYFTLFGLPA…LTRAEYLLSL (73 aa)) constitute a J domain.

This sequence belongs to the HscB family. As to quaternary structure, interacts with HscA and stimulates its ATPase activity. Interacts with IscU.

In terms of biological role, co-chaperone involved in the maturation of iron-sulfur cluster-containing proteins. Seems to help targeting proteins to be folded toward HscA. The chain is Co-chaperone protein HscB from Salmonella arizonae (strain ATCC BAA-731 / CDC346-86 / RSK2980).